We begin with the raw amino-acid sequence, 257 residues long: tRNA pseudouridine synthase A (257 aa).

Residue Asp43 is the Nucleophile of the active site. Tyr94 lines the substrate pocket.

This sequence belongs to the tRNA pseudouridine synthase TruA family.

The enzyme catalyses uridine(38/39/40) in tRNA = pseudouridine(38/39/40) in tRNA. Formation of pseudouridine at positions 38, 39 and 40 in the anticodon stem and loop of transfer RNAs. This chain is tRNA pseudouridine synthase A, found in Pyrobaculum calidifontis (strain DSM 21063 / JCM 11548 / VA1).